Consider the following 143-residue polypeptide: Large ribosomal subunit protein uL15 (143 aa).

The disordered stretch occupies residues 1 to 56 (MQLNSIKPAAGAKHAKRRVGRGIGSGLGKTAGRGHKGQKSRAGGYHKVGFEGGQMP). Residues 21–31 (RGIGSGLGKTA) are compositionally biased toward gly residues.

Belongs to the universal ribosomal protein uL15 family. Part of the 50S ribosomal subunit.

Its function is as follows. Binds to the 23S rRNA. The protein is Large ribosomal subunit protein uL15 of Verminephrobacter eiseniae (strain EF01-2).